Reading from the N-terminus, the 357-residue chain is Peptide chain release factor 1 (357 aa).

Gln236 carries the N5-methylglutamine modification.

This sequence belongs to the prokaryotic/mitochondrial release factor family. Methylated by PrmC. Methylation increases the termination efficiency of RF1.

The protein resides in the cytoplasm. In terms of biological role, peptide chain release factor 1 directs the termination of translation in response to the peptide chain termination codons UAG and UAA. In Mycobacterium avium (strain 104), this protein is Peptide chain release factor 1.